The primary structure comprises 552 residues: MSAIALTVSMLALVAVLGLWIGNWKVYGVGLGIGGVLFGGIIVGHFAQTYELVLNGDMLHFIQEFGLILFVYTIGIQVGPGFFSSLRVSGLRLNCFAILMVIVGGLVTAIIHKLFAVPLPIILGVFSGAVTNTPALGAAQQILTDLGSPPQLVSQMGMGYAMAYPFGICGILLVMWLIRLFFKINVDREAKEFDSSHGQNRELLQTMNVAVRNPNLHGLSMQDVPLLNSDEVVCSRLKRGDLLMVPLSGTVIELGDYLHLVGQREALEKVRLVVGEEVDVTLSTASTVLQTARVVVTNEAVLGKKIRDLNLKQKYDVAITRLNRAGIELVASNNASLQFGDILNLVGRPESIEAVSAVVGNAQQKLQQVQMLPVFIGVGLGVLLGSIPLFIPGFPAALRLGLAGGPLVVALILGRIGSIGKLYWFMPPSANLALRELGIVLFLSVVGLKSGGDFINTLVNGDGLAWIGYGAMITGIPLLTVGILARMLAKMNYLTLCGMLAGSMTDPPALAFANGLHPTSGAAALSYATVYPLAMFLRIMSPQILAVLFWTL.

The next 6 membrane-spanning stretches (helical) occupy residues 1–21 (MSAI…GLWI), 26–46 (VYGV…VGHF), 65–85 (FGLI…FFSS), 96–116 (FAIL…KLFA), 119–139 (LPII…LGAA), and 158–178 (MGYA…MWLI). 2 consecutive RCK C-terminal domains span residues 192–276 (EFDS…VVGE) and 279–361 (DVTL…VVGN). Transmembrane regions (helical) follow at residues 371-391 (MLPV…PLFI), 393-413 (GFPA…ALIL), 439-459 (IVLF…NTLV), 464-484 (LAWI…VGIL), 493-513 (YLTL…LAFA), and 530-550 (VYPL…VLFW).

It belongs to the AAE transporter (TC 2.A.81) family. YidE subfamily.

The protein localises to the cell membrane. The protein is Putative transport protein YE4162 of Yersinia enterocolitica serotype O:8 / biotype 1B (strain NCTC 13174 / 8081).